The chain runs to 922 residues: Periodic tryptophan protein 2 homolog (922 aa).

WD repeat units follow at residues 12–52 (GTVY…TLPI), 53–92 (QSKY…VLGE), 94–132 (KFFK…KQPN), 141–180 (THKS…VSYF), 182–221 (VKGS…EMEQ), 271–310 (GVKC…QLYK), 313–353 (ISSH…YILK), 356–395 (GHSY…CYIT), 398–439 (EHEG…NFRT), 443–485 (PNKT…DILS), 486–525 (GHQS…EIRE), 528–567 (QHTS…QIGL), 590–629 (SAGR…LIKK), and 691–731 (KKKQ…DPTD). Residues 893-922 (ESKKNKEQEEDQFSDDEETVYQNNKKNKNK) are disordered. Residues 900-911 (QEEDQFSDDEET) show a composition bias toward acidic residues.

The protein belongs to the WD repeat PWP2 family. As to quaternary structure, part of the small subunit (SSU) processome, composed of more than 70 proteins and the RNA chaperone small nucleolar RNA (snoRNA) U3.

It is found in the nucleus. Its subcellular location is the nucleolus. Its function is as follows. Part of the small subunit (SSU) processome, first precursor of the small eukaryotic ribosomal subunit. During the assembly of the SSU processome in the nucleolus, many ribosome biogenesis factors, an RNA chaperone and ribosomal proteins associate with the nascent pre-rRNA and work in concert to generate RNA folding, modifications, rearrangements and cleavage as well as targeted degradation of pre-ribosomal RNA by the RNA exosome. This is Periodic tryptophan protein 2 homolog (pwp2) from Dictyostelium discoideum (Social amoeba).